Consider the following 476-residue polypeptide: Ribulose bisphosphate carboxylase large chain (476 aa).

N116 and T166 together coordinate substrate. K168 acts as the Proton acceptor in catalysis. Residue K170 participates in substrate binding. Residues K194, D196, and E197 each contribute to the Mg(2+) site. N6-carboxylysine is present on K194. Residue H286 is the Proton acceptor of the active site. Positions 287, 319, and 371 each coordinate substrate.

The protein belongs to the RuBisCO large chain family. Type I subfamily. In terms of assembly, heterohexadecamer of 8 large chains and 8 small chains. Mg(2+) serves as cofactor.

It catalyses the reaction 2 (2R)-3-phosphoglycerate + 2 H(+) = D-ribulose 1,5-bisphosphate + CO2 + H2O. The enzyme catalyses D-ribulose 1,5-bisphosphate + O2 = 2-phosphoglycolate + (2R)-3-phosphoglycerate + 2 H(+). Functionally, ruBisCO catalyzes two reactions: the carboxylation of D-ribulose 1,5-bisphosphate, the primary event in carbon dioxide fixation, as well as the oxidative fragmentation of the pentose substrate. Both reactions occur simultaneously and in competition at the same active site. This Pseudonocardia dioxanivorans (strain ATCC 55486 / DSM 44775 / JCM 13855 / CB1190) protein is Ribulose bisphosphate carboxylase large chain.